We begin with the raw amino-acid sequence, 365 residues long: MFEVNPVLNKLKELSERTELLRGYLDYDAKKERLEEVNAELEQPDVWNEPERAQALGKERVALENVVGTIDTLTQGADDVAMLVELAVEGEDEDTFNEAVAEADVLETKLVDLEFRRMFSGQHDPSDCYIDIQSGSGGTEAQDWANMVLRMYLRWGDAHGYKPELIECSEGDVAGIKSATIKFTGEYAFGWLRTETGVHRLVRKSPFDSGGRRHTSFCSVFVYPEIDDDIDIEINPADLRIDVYRASGAGGQHVNRTESAVRITHIPTGVVVQCQNDRSQHKNKDQCMKQLKAKLYELEIQKQNAEKQALEETKSDIGWGSQIRSYVLDDARIKDLRTGVETRNTQAVLDGDLDKFIEASLKSGL.

Q252 carries the N5-methylglutamine modification.

It belongs to the prokaryotic/mitochondrial release factor family. In terms of processing, methylated by PrmC. Methylation increases the termination efficiency of RF2.

The protein localises to the cytoplasm. Functionally, peptide chain release factor 2 directs the termination of translation in response to the peptide chain termination codons UGA and UAA. The polypeptide is Peptide chain release factor 2 (Aeromonas hydrophila subsp. hydrophila (strain ATCC 7966 / DSM 30187 / BCRC 13018 / CCUG 14551 / JCM 1027 / KCTC 2358 / NCIMB 9240 / NCTC 8049)).